Consider the following 804-residue polypeptide: MEQIITGEGQIVPDLDEHITRSGIDQAGTDYHMVSIIGCQSSGKSTLLNLLFGTKFETMNEQKGRQQTTKGIHAARAVNGPILLFDVEGSDSRERGDSDALFERKSSLFALALSELLVINMWESDIGRYNAANIPMLKTVMEVNVQLFLAQSTSKSKILFVIRDSTIPNFDVIKFQINRDMENIWAEITLPDSLKDKTIHDFFDFDFYAIHHMVIQRDIFDKDISALRQRFIDEKEENYLFKEKSTKVVPGGGLSTYIRNLWEVINENKELNIPSQKLMLSRFKCEENAKAAYDQFKEKVTKTILEPMADESVNLGDKFKSNAEEAIKAANKFYHDNSWRYQQAAVEEFQQKLSTDIGDLLISYYIKHCNYYARQVMQEFTKFISGLPDSFEKGGKWAIEVQAKIDELSLRLDSTCRDSLIEGYKWQFPSFKTIKAMDDARKSYEEIMTKKLYKNIFAEEKIAFDDKASELLMIADQNMWENLRKLIEASAKVTDDRFMEIIKTNVLNPKPQEGTLKRFQRHALNIVKESANYIMMKMKTAFDRSFRYEKNGRPRVWTRRHNLNQIYEESRASGRKVLILFTYCRLASPDDQTPNNPLNQVLIPVEKSQEIEEKFEKLIIHAYEEARASVLASQNNEHIPPWAWFLFLFSCSDYILWWLSNPLLFSLTVLFGGTYLVLNQLGLWDTAVQKLLDIIKKKIVELGATPDENNETETNQTIPVEESQITPPPPTETTTDDGPVMKRRVHRSKAQGLTKTESNVTFANVSNANDEQSLTKNNTEDSLNTGSSSSGQRHRKRVRVGTLV.

At 1–638 the chain is on the cytoplasmic side; it reads MEQIITGEGQ…SVLASQNNEH (638 aa). The GB1/RHD3-type G domain occupies 28–245; it reads GTDYHMVSII…EENYLFKEKS (218 aa). Position 38-45 (38-45) interacts with GTP; sequence GCQSSGKS. A helical membrane pass occupies residues 639–659; that stretch reads IPPWAWFLFLFSCSDYILWWL. Residues 660-662 lie on the Lumenal side of the membrane; sequence SNP. The helical transmembrane segment at 663-683 threads the bilayer; it reads LLFSLTVLFGGTYLVLNQLGL. The Cytoplasmic segment spans residues 684-804; it reads WDTAVQKLLD…RKRVRVGTLV (121 aa). A disordered region spans residues 706-804; the sequence is PDENNETETN…RKRVRVGTLV (99 aa). Positions 751–791 are enriched in polar residues; the sequence is QGLTKTESNVTFANVSNANDEQSLTKNNTEDSLNTGSSSSG. Residues 792 to 804 are compositionally biased toward basic residues; that stretch reads QRHRKRVRVGTLV.

Belongs to the TRAFAC class dynamin-like GTPase superfamily. GB1/RHD3 GTPase family. RHD3 subfamily.

It localises to the endoplasmic reticulum membrane. In terms of biological role, probable GTP-binding protein that may be involved in cell development. The polypeptide is Protein SEY1 homolog 1 (Trichomonas vaginalis (strain ATCC PRA-98 / G3)).